The chain runs to 393 residues: Telomeric repeat-binding factor 2-interacting protein 1 (393 aa).

A2 carries the N-acetylalanine modification. One can recognise a BRCT domain in the interval 10 to 101; that stretch reads DPNGPTHSST…EKLELEAYRL (92 aa). Residues S36 and S43 each carry the phosphoserine modification. Residues 104–132 are disordered; that stretch reads TEQASDPKPGASAEGSTEPEPQPLTGRIA. Residue K111 forms a Glycyl lysine isopeptide (Lys-Gly) (interchain with G-Cter in SUMO2) linkage. Residues 125–185 form the Myb-like domain; sequence QPLTGRIAYT…SLKDRYLKHL (61 aa). Phosphoserine occurs at positions 151 and 153. A Glycyl lysine isopeptide (Lys-Gly) (interchain with G-Cter in SUMO2) cross-link involves residue K191. Disordered stretches follow at residues 194–248 and 272–305; these read LGNA…EADN and HITM…TQEV. S200 and S203 each carry phosphoserine. Glycyl lysine isopeptide (Lys-Gly) (interchain with G-Cter in SUMO2) cross-links involve residues K205, K209, and K237. Basic and acidic residues predominate over residues 223-248; that stretch reads QNKRTPDLPEEECVKGETKENGEADN. Acidic residues predominate over residues 282-297; it reads TPEEDSETQPDEEEEE. K366 is covalently cross-linked (Glycyl lysine isopeptide (Lys-Gly) (interchain with G-Cter in SUMO2)). The Nuclear localization signal signature appears at 377 to 393; the sequence is KKYGAQNVARRIEFRKK.

The protein belongs to the RAP1 family. In terms of assembly, associates with the I-kappa-B-kinase (IKK) core complex, composed of CHUK, IKBKB and IKBKG. Homodimer. Component of the shelterin complex (telosome) composed of TERF1, TERF2, TINF2, TERF2IP ACD and POT1. Interacts with TERF2 (but not TERF1) with its C-terminus. Interacts with SLX4/BTBD12. Interacts with TERF2; the interaction is direct.

Its subcellular location is the nucleus. It localises to the cytoplasm. The protein resides in the chromosome. It is found in the telomere. In terms of biological role, acts both as a regulator of telomere function and as a transcription regulator. Involved in the regulation of telomere length and protection as a component of the shelterin complex (telosome). In contrast to other components of the shelterin complex, it is dispensible for telomere capping and does not participate in the protection of telomeres against non-homologous end-joining (NHEJ)-mediated repair. Instead, it is required to negatively regulate telomere recombination and is essential for repressing homology-directed repair (HDR), which can affect telomere length. Does not bind DNA directly: recruited to telomeric double-stranded 5'-TTAGGG-3' repeats via its interaction with TERF2. Independently of its function in telomeres, also acts as a transcription regulator: recruited to extratelomeric 5'-TTAGGG-3' sites via its association with TERF2 or other factors, and regulates gene expression. When cytoplasmic, associates with the I-kappa-B-kinase (IKK) complex and acts as a regulator of the NF-kappa-B signaling by promoting IKK-mediated phosphorylation of RELA/p65, leading to activate expression of NF-kappa-B target genes. In Rattus norvegicus (Rat), this protein is Telomeric repeat-binding factor 2-interacting protein 1 (Terf2ip).